The following is a 74-amino-acid chain: Conotoxin Bu4 (74 aa).

The N-terminal stretch at 1 to 22 (MKLTCVVIVAVLLLTACQLIIA) is a signal peptide. Residues 23–45 (EDSRGTQLHRALRKATKLSVSTR) constitute a propeptide that is removed on maturation. 3 disulfide bridges follow: cysteine 47–cysteine 63, cysteine 54–cysteine 66, and cysteine 62–cysteine 73.

Belongs to the conotoxin O1 superfamily. As to expression, expressed by the venom duct.

The protein localises to the secreted. The sequence is that of Conotoxin Bu4 from Conus bullatus (Bubble cone).